A 369-amino-acid chain; its full sequence is 3-dehydroquinate synthase (369 aa).

NAD(+)-binding positions include 75 to 80, 109 to 113, 133 to 134, Lys-146, Lys-155, and 173 to 176; these read DGEEHK, GVIGD, TT, and TLKT. Residues Glu-188, His-251, and His-268 each coordinate Zn(2+).

It belongs to the sugar phosphate cyclases superfamily. Dehydroquinate synthase family. Co(2+) is required as a cofactor. Zn(2+) serves as cofactor. It depends on NAD(+) as a cofactor.

The protein localises to the cytoplasm. The enzyme catalyses 7-phospho-2-dehydro-3-deoxy-D-arabino-heptonate = 3-dehydroquinate + phosphate. It functions in the pathway metabolic intermediate biosynthesis; chorismate biosynthesis; chorismate from D-erythrose 4-phosphate and phosphoenolpyruvate: step 2/7. Catalyzes the conversion of 3-deoxy-D-arabino-heptulosonate 7-phosphate (DAHP) to dehydroquinate (DHQ). The sequence is that of 3-dehydroquinate synthase from Legionella pneumophila (strain Paris).